Here is a 319-residue protein sequence, read N- to C-terminus: Beta-ketoacyl-[acyl-carrier-protein] synthase III (319 aa).

Active-site residues include Cys115 and His246. Positions 247 to 251 (QANLR) are ACP-binding. Asn276 is a catalytic residue.

It belongs to the thiolase-like superfamily. FabH family. Homodimer.

The protein localises to the cytoplasm. It catalyses the reaction malonyl-[ACP] + acetyl-CoA + H(+) = 3-oxobutanoyl-[ACP] + CO2 + CoA. It participates in lipid metabolism; fatty acid biosynthesis. Its function is as follows. Catalyzes the condensation reaction of fatty acid synthesis by the addition to an acyl acceptor of two carbons from malonyl-ACP. Catalyzes the first condensation reaction which initiates fatty acid synthesis and may therefore play a role in governing the total rate of fatty acid production. Possesses both acetoacetyl-ACP synthase and acetyl transacylase activities. Its substrate specificity determines the biosynthesis of branched-chain and/or straight-chain of fatty acids. The chain is Beta-ketoacyl-[acyl-carrier-protein] synthase III from Coxiella burnetii (strain Dugway 5J108-111).